A 455-amino-acid polypeptide reads, in one-letter code: Nucleolar protein 12 (455 aa).

Disordered regions lie at residues methionine 1 to asparagine 104 and glutamine 117 to alanine 142. Residues asparagine 24–lysine 37 show a composition bias toward basic and acidic residues. The span at proline 51–alanine 66 shows a compositional bias: polar residues. The segment covering glutamate 68–glutamine 91 has biased composition (acidic residues). Over residues serine 124–lysine 141 the composition is skewed to basic and acidic residues. 2 RRM domains span residues arginine 160–histidine 258 and arginine 266–serine 351. Disordered stretches follow at residues leucine 333 to valine 402 and alanine 420 to valine 455. Residues lysine 339–arginine 348 are compositionally biased toward basic residues. The span at alanine 349–phenylalanine 363 shows a compositional bias: polar residues. Residues lysine 425–isoleucine 438 show a composition bias toward basic residues. The segment covering arginine 439 to valine 455 has biased composition (basic and acidic residues).

The protein belongs to the RRM RBM34 family.

The protein resides in the nucleus. The protein localises to the nucleolus. In terms of biological role, involved in pre-25S rRNA processing. The chain is Nucleolar protein 12 (NOP12) from Candida albicans (strain SC5314 / ATCC MYA-2876) (Yeast).